The following is a 62-amino-acid chain: uncharacterized protein (62 aa).

This is an uncharacterized protein from Caenorhabditis elegans.